The primary structure comprises 345 residues: Protein RecA (345 aa).

Position 65–72 (65–72) interacts with ATP; that stretch reads GPESSGKT.

The protein belongs to the RecA family.

It is found in the cytoplasm. Its function is as follows. Can catalyze the hydrolysis of ATP in the presence of single-stranded DNA, the ATP-dependent uptake of single-stranded DNA by duplex DNA, and the ATP-dependent hybridization of homologous single-stranded DNAs. It interacts with LexA causing its activation and leading to its autocatalytic cleavage. This Colwellia psychrerythraea (strain 34H / ATCC BAA-681) (Vibrio psychroerythus) protein is Protein RecA.